The primary structure comprises 209 residues: Small ribosomal subunit protein uS3 (209 aa).

The KH type-2 domain maps to 38 to 107; that stretch reads IRKFIKNRYY…RVVINIEEIK (70 aa).

Belongs to the universal ribosomal protein uS3 family. Part of the 30S ribosomal subunit. Forms a tight complex with proteins S10 and S14.

Functionally, binds the lower part of the 30S subunit head. Binds mRNA in the 70S ribosome, positioning it for translation. This is Small ribosomal subunit protein uS3 from Thermotoga petrophila (strain ATCC BAA-488 / DSM 13995 / JCM 10881 / RKU-1).